The chain runs to 189 residues: Orotate phosphoribosyltransferase (189 aa).

5-phospho-alpha-D-ribose 1-diphosphate is bound by residues Arg99, Lys100, Lys103, His105, and 126–134 (EDVITTGGS). Thr130 and Arg158 together coordinate orotate.

Belongs to the purine/pyrimidine phosphoribosyltransferase family. PyrE subfamily. In terms of assembly, homodimer. Mg(2+) serves as cofactor.

It carries out the reaction orotidine 5'-phosphate + diphosphate = orotate + 5-phospho-alpha-D-ribose 1-diphosphate. It functions in the pathway pyrimidine metabolism; UMP biosynthesis via de novo pathway; UMP from orotate: step 1/2. In terms of biological role, catalyzes the transfer of a ribosyl phosphate group from 5-phosphoribose 1-diphosphate to orotate, leading to the formation of orotidine monophosphate (OMP). This is Orotate phosphoribosyltransferase from Thermosynechococcus vestitus (strain NIES-2133 / IAM M-273 / BP-1).